The chain runs to 324 residues: Autolytic lysozyme (324 aa).

Active-site residues include Asp5 and Glu91. A run of 5 repeats spans residues 212–234 (LLKRGLEVDGIEGPETEAAIKDF), 235–254 (QSIMGLTVDGIWGTNTSGAA), 255–277 (QQIFSRPLDGVAYPHYEYATRYI), 278–300 (QYRVGASVDGTFGSGTKAKVAAW), and 301–324 (QSNQGLMADGVVGSATWSKLLDEN). The interval 212–324 (LLKRGLEVDG…ATWSKLLDEN (113 aa)) is 5 X 23 AA tandem repeats.

This sequence belongs to the glycosyl hydrolase 25 family. Monomer.

The protein resides in the secreted. The protein localises to the cytoplasm. The catalysed reaction is Hydrolysis of (1-&gt;4)-beta-linkages between N-acetylmuramic acid and N-acetyl-D-glucosamine residues in a peptidoglycan and between N-acetyl-D-glucosamine residues in chitodextrins.. This Clostridium acetobutylicum (strain ATCC 824 / DSM 792 / JCM 1419 / IAM 19013 / LMG 5710 / NBRC 13948 / NRRL B-527 / VKM B-1787 / 2291 / W) protein is Autolytic lysozyme (lyc).